The following is a 407-amino-acid chain: Growth/differentiation factor 11 (407 aa).

The signal sequence occupies residues 1-24 (MVLAAPLLLGFLLLALELRPRGEA). The propeptide occupies 25–298 (AEGPAAAAAA…VLENTKRSRR (274 aa)). Residue Asn-94 is glycosylated (N-linked (GlcNAc...) asparagine). Disulfide bonds link Cys-304/Cys-314, Cys-313/Cys-372, Cys-341/Cys-404, and Cys-345/Cys-406.

Belongs to the TGF-beta family. Homodimer; disulfide-linked. Interacts directly with ACVR2B. Interacts directly with ACVR2A. Interacts with ACVR1B, TGFBR1 and ACVR1C in an ACVR2B-dependent manner. Interacts with FST isoform 2/FS-288. Post-translationally, synthesized as large precursor molecule that undergoes proteolytic cleavage by furin-like proteases. This produces an inactive form consisting of the mature C-terminal portion non-covalently bound to its cleaved N-terminal propeptide. Activation of the mature form requires additional cleavage of the propeptide by a tolloid-like metalloproteinase. As to expression, in the embryo, strong expression is seen in the palatal epithelia, including the medial edge epithelial and midline epithelial seam of the palatal shelves. Less pronounced expression is also seen throughout the palatal shelf and tongue mesenchyme.

It localises to the secreted. Its function is as follows. Secreted signal that acts globally to regulate anterior/posterior axial patterning during development. May play critical roles in patterning both mesodermal and neural tissues. It is required for proper vertebral patterning and orofacial development. Signals through activin receptors type-2, ACVR2A and ACVR2B, and activin receptors type-1, ACVR1B, ACVR1C and TGFBR1 leading to the phosphorylation of SMAD2 and SMAD3. The protein is Growth/differentiation factor 11 (GDF11) of Homo sapiens (Human).